The sequence spans 431 residues: Histidinol dehydrogenase (431 aa).

3 residues coordinate NAD(+): Tyr131, Gln193, and Asn216. Positions 239, 261, and 264 each coordinate substrate. 2 residues coordinate Zn(2+): Gln261 and His264. Catalysis depends on proton acceptor residues Glu329 and His330. Substrate is bound by residues His330, Asp363, Glu417, and His422. Residue Asp363 coordinates Zn(2+). Residue His422 participates in Zn(2+) binding.

The protein belongs to the histidinol dehydrogenase family. It depends on Zn(2+) as a cofactor.

It carries out the reaction L-histidinol + 2 NAD(+) + H2O = L-histidine + 2 NADH + 3 H(+). The protein operates within amino-acid biosynthesis; L-histidine biosynthesis; L-histidine from 5-phospho-alpha-D-ribose 1-diphosphate: step 9/9. Catalyzes the sequential NAD-dependent oxidations of L-histidinol to L-histidinaldehyde and then to L-histidine. This is Histidinol dehydrogenase from Clostridium acetobutylicum (strain ATCC 824 / DSM 792 / JCM 1419 / IAM 19013 / LMG 5710 / NBRC 13948 / NRRL B-527 / VKM B-1787 / 2291 / W).